The primary structure comprises 134 residues: Putative pre-16S rRNA nuclease (134 aa).

The protein belongs to the YqgF nuclease family.

It localises to the cytoplasm. Functionally, could be a nuclease involved in processing of the 5'-end of pre-16S rRNA. This chain is Putative pre-16S rRNA nuclease, found in Helicobacter pylori (strain HPAG1).